The sequence spans 157 residues: Endoribonuclease YbeY (157 aa).

Positions 111, 115, and 121 each coordinate Zn(2+).

Belongs to the endoribonuclease YbeY family. Requires Zn(2+) as cofactor.

The protein localises to the cytoplasm. Its function is as follows. Single strand-specific metallo-endoribonuclease involved in late-stage 70S ribosome quality control and in maturation of the 3' terminus of the 16S rRNA. In Pseudomonas putida (strain W619), this protein is Endoribonuclease YbeY.